Reading from the N-terminus, the 249-residue chain is Pulmonary surfactant-associated protein A (249 aa).

The first 20 residues, 1-20 (MLRWPLALTFLLLAVSGLEC), serve as a signal peptide directing secretion. A Collagen-like domain is found at 28–100 (ASPGIPGTPG…PGERGPPGLP (73 aa)). The segment at 29-102 (SPGIPGTPGS…ERGPPGLPAH (74 aa)) is disordered. A 4-hydroxyproline mark is found at Pro-30, Pro-33, Pro-36, Pro-42, Pro-54, Pro-57, Pro-63, and Pro-70. Residues 42–51 (PGRDGRDGIK) are compositionally biased toward basic and acidic residues. Residues 84–93 (ERGEKGEPGE) show a composition bias toward basic and acidic residues. Residues 133–249 (AVGEKVFSTN…QQYRLAICEF (117 aa)) enclose the C-type lectin domain. Disulfide bonds link Cys-155–Cys-247 and Cys-225–Cys-239. N-linked (GlcNAc...) asparagine glycosylation occurs at Asn-208. Ca(2+) contacts are provided by Glu-216, Arg-218, Asn-235, and Asp-236.

This sequence belongs to the SFTPA family. As to quaternary structure, oligomeric complex of 6 set of homotrimers.

The protein localises to the secreted. Its subcellular location is the extracellular space. It localises to the extracellular matrix. It is found in the surface film. In presence of calcium ions, it binds to surfactant phospholipids and contributes to lower the surface tension at the air-liquid interface in the alveoli of the mammalian lung and is essential for normal respiration. Enhances the expression of MYO18A/SP-R210 on alveolar macrophages. The protein is Pulmonary surfactant-associated protein A (SFTPA1) of Sus scrofa (Pig).